The sequence spans 62 residues: Large ribosomal subunit protein bL32 (62 aa).

Basic residues predominate over residues 1–19 (MAVPKRKTSKTRRDKRRAS). Residues 1–20 (MAVPKRKTSKTRRDKRRASS) are disordered.

This sequence belongs to the bacterial ribosomal protein bL32 family.

The polypeptide is Large ribosomal subunit protein bL32 (Finegoldia magna (strain ATCC 29328 / DSM 20472 / WAL 2508) (Peptostreptococcus magnus)).